We begin with the raw amino-acid sequence, 33 residues long: uncharacterized protein (33 aa).

This is an uncharacterized protein from Archaeoglobus fulgidus (strain ATCC 49558 / DSM 4304 / JCM 9628 / NBRC 100126 / VC-16).